The chain runs to 308 residues: 4-diphosphocytidyl-2-C-methyl-D-erythritol kinase (308 aa).

Lysine 24 is a catalytic residue. 118–128 (PVGAGMAGGSA) is an ATP binding site. Aspartate 160 is an active-site residue.

Belongs to the GHMP kinase family. IspE subfamily.

It catalyses the reaction 4-CDP-2-C-methyl-D-erythritol + ATP = 4-CDP-2-C-methyl-D-erythritol 2-phosphate + ADP + H(+). It participates in isoprenoid biosynthesis; isopentenyl diphosphate biosynthesis via DXP pathway; isopentenyl diphosphate from 1-deoxy-D-xylulose 5-phosphate: step 3/6. Functionally, catalyzes the phosphorylation of the position 2 hydroxy group of 4-diphosphocytidyl-2C-methyl-D-erythritol. This chain is 4-diphosphocytidyl-2-C-methyl-D-erythritol kinase, found in Bifidobacterium adolescentis (strain ATCC 15703 / DSM 20083 / NCTC 11814 / E194a).